A 363-amino-acid polypeptide reads, in one-letter code: MATLRRLREAPRHLLVCEKSNFGNHKSRHRHLVQTHYYNYRVSFLIPECGILSEELKNLVMNTGPYYFVKNLPLHELITPEFISTFIKKGSCYALTYNTHIDEDNTVALLPNGKLILSLDKDTYEETGLQGHPSQFSGRKIMKFIVSIDLMELSLNLDSKKYERISWSFKEKKPLKFDFLLAWHKTGSEESTMMSYFSKYQIQEHQPKVALSTLRDLQCPVLQSSELEGTPEVSCRALELFDWLGAVFSNVDLNNEPNNFISTYCCPEPSTVVAKAYLCTITGFILPEKICLLLEHLCHYFDEPKLAPWVTLSVQGFADSPVSWEKNEHGFRKGGEHLYNFVIFNNQDYWLQMAVGANDHCPP.

In terms of assembly, component of nuclear RNase P and RNase MRP ribonucleoproteins. RNase P consists of a catalytic RNA moiety and about 10 protein subunits; POP1, POP4, POP5, POP7, RPP14, RPP21, RPP25, RPP30, RPP38 and RPP40. Within the RNase P complex, POP1, POP7 and RPP25 form the 'finger' subcomplex, POP5, RPP14, RPP40 and homodimeric RPP30 form the 'palm' subcomplex, and RPP21, POP4 and RPP38 form the 'wrist' subcomplex. All subunits of the RNase P complex interact with the catalytic RNA. Several subunits of RNase P are also part of the RNase MRP complex. RNase MRP consists of a catalytic RNA moiety and about 8 protein subunits; POP1, POP7, RPP25, RPP30, RPP38, RPP40 and possibly also POP4 and POP5.

It is found in the nucleus. The protein resides in the nucleolus. Functionally, component of ribonuclease P, a ribonucleoprotein complex that generates mature tRNA molecules by cleaving their 5'-ends. Also a component of the MRP ribonuclease complex, which cleaves pre-rRNA sequences. In Homo sapiens (Human), this protein is Ribonuclease P protein subunit p40 (RPP40).